The following is a 203-amino-acid chain: ATP-dependent Clp protease proteolytic subunit (203 aa).

Serine 101 (nucleophile) is an active-site residue. The active site involves histidine 126.

This sequence belongs to the peptidase S14 family. Component of the chloroplastic Clp protease core complex.

It is found in the plastid. The protein resides in the chloroplast stroma. The enzyme catalyses Hydrolysis of proteins to small peptides in the presence of ATP and magnesium. alpha-casein is the usual test substrate. In the absence of ATP, only oligopeptides shorter than five residues are hydrolyzed (such as succinyl-Leu-Tyr-|-NHMec, and Leu-Tyr-Leu-|-Tyr-Trp, in which cleavage of the -Tyr-|-Leu- and -Tyr-|-Trp bonds also occurs).. Cleaves peptides in various proteins in a process that requires ATP hydrolysis. Has a chymotrypsin-like activity. Plays a major role in the degradation of misfolded proteins. The sequence is that of ATP-dependent Clp protease proteolytic subunit from Marchantia polymorpha (Common liverwort).